A 160-amino-acid chain; its full sequence is Large ribosomal subunit protein uL16 (160 aa).

The tract at residues 138–160 (KNLENSSQENTKDSKKSQEEVKQ) is disordered. Positions 147–160 (NTKDSKKSQEEVKQ) are enriched in basic and acidic residues.

Belongs to the universal ribosomal protein uL16 family. In terms of assembly, part of the 50S ribosomal subunit.

Functionally, binds 23S rRNA and is also seen to make contacts with the A and possibly P site tRNAs. This Prochlorococcus marinus (strain AS9601) protein is Large ribosomal subunit protein uL16.